Reading from the N-terminus, the 925-residue chain is Coronin-7 (925 aa).

4 WD repeats span residues 75 to 115, 124 to 163, 166 to 205, and 209 to 253; these read CHSD…QALP, PEDL…PLTE, AHGD…QASQ, and AHEN…SALA. Disordered regions lie at residues 196–216 and 399–465; these read DPRT…SRDS and LVPP…SLQS. A compositionally biased stretch (polar residues) spans 201 to 210; sequence PQASQSTQAH. A compositionally biased stretch (low complexity) spans 429 to 460; it reads SSPPSSLTSPSTPSSLGPTLSSTSGIGTGPSL. A phosphoserine mark is found at serine 462 and serine 465. Lysine 472 is covalently cross-linked (Glycyl lysine isopeptide (Lys-Gly) (interchain with G-Cter in ubiquitin)). WD repeat units follow at residues 542 to 582, 592 to 632, and 635 to 674; these read QNGA…LEEV, GHME…DRLK, and GHQD…EPLQ. Residue lysine 680 forms a Glycyl lysine isopeptide (Lys-Gly) (interchain with G-Cter in ubiquitin) linkage. The stretch at 728–768 is one WD 8 repeat; sequence DVAPSTLVPSYEPRHWPGAPDWQGDARVFLYELLPESPFFM. The disordered stretch occupies residues 857-925; that stretch reads LQPPDMSPVS…FEGVDEDEWD (69 aa). Positions 866 to 882 are enriched in low complexity; the sequence is SQAPREAPARRAPSSAQ. A compositionally biased stretch (basic and acidic residues) spans 884–896; that stretch reads LEEKSDQQKKEEL. Serine 915 carries the post-translational modification Phosphoserine.

Belongs to the WD repeat coronin family. As to quaternary structure, interacts with clathrin adapter AP1 complex. This interaction takes place at Golgi membranes and not AP1-positive endosomal membranes. Interacts (when ubiquitinated at Lys-472) with EPS15. The membrane-associated form is phosphorylated on tyrosine residues. In terms of processing, ubiquitinated via 'Lys-33'-linked ubiquitin chains by the BCR(KLHL20) E3 ubiquitin ligase complex: 'Lys-33'-linked ubiquitination promotes interaction with EPS15 and facilitates actin polymerization at the trans-Golgi network, thereby facilitating post-Golgi trafficking. Deubiquitinated by ZRANB1/TRABID.

It localises to the golgi apparatus membrane. Its subcellular location is the golgi apparatus. It is found in the trans-Golgi network. The protein resides in the cytoplasmic vesicle. The protein localises to the cytoplasm. It localises to the cytosol. Functionally, F-actin regulator involved in anterograde Golgi to endosome transport: upon ubiquitination via 'Lys-33'-linked ubiquitin chains by the BCR(KLHL20) E3 ubiquitin ligase complex, interacts with EPS15 and localizes to the trans-Golgi network, where it promotes actin polymerization, thereby facilitating post-Golgi trafficking. May play a role in the maintenance of the Golgi apparatus morphology. This chain is Coronin-7 (CORO7), found in Pongo abelii (Sumatran orangutan).